A 496-amino-acid chain; its full sequence is Hexokinase-1 (496 aa).

The chain crosses the membrane as a helical span at residues valine 4–valine 24. The Hexokinase domain occupies glycine 35 to alanine 487. The tract at residues serine 90–valine 228 is hexokinase small subdomain. Positions 104, 105, and 106 each coordinate ADP. D-glucose-binding residues include threonine 194, lysine 195, asparagine 229, and aspartate 230. A hexokinase large subdomain region spans residues asparagine 229–aspartate 476. Residue threonine 253 coordinates ADP. 3 residues coordinate D-glucose: asparagine 256, glutamate 284, and glutamate 315. An ADP-binding site is contributed by glycine 441.

It belongs to the hexokinase family. In terms of assembly, interacts with RPT5B in nucleus. Interacts with RHIP1. Interacts with KING1 in mitochondria. Interacts with CLF (via SANT domain) and EZA1/SWN (via SANT domain) in nucleus. Highly expressed in flowers and siliques, at intermediate levels in roots and stems, and at lower levels in rosette and cauline leaves.

It localises to the mitochondrion outer membrane. It is found in the nucleus. The enzyme catalyses a D-hexose + ATP = a D-hexose 6-phosphate + ADP + H(+). It catalyses the reaction D-fructose + ATP = D-fructose 6-phosphate + ADP + H(+). The catalysed reaction is D-glucose + ATP = D-glucose 6-phosphate + ADP + H(+). It participates in carbohydrate metabolism; hexose metabolism. Its pathway is carbohydrate degradation; glycolysis; D-glyceraldehyde 3-phosphate and glycerone phosphate from D-glucose: step 1/4. Functionally, fructose and glucose phosphorylating enzyme. May be involved in the phosphorylation of glucose during the export from mitochondrion to cytosol. Acts as a sugar sensor which may regulate sugar-dependent gene repression or activation. Mediates the effects of sugar on plant growth and development independently of its catalytic activity or the sugar metabolism. May regulate the execution of program cell death in plant cells. Promotes roots and leaves growth. Together with sugar, is involved in the regulation of the expression of aquaporin genes, and reduces leaf water conductance, to coordinate sugar levels with the loss of water through transpiration. Regulates cell proliferation and expansion early during leaf development. Involved in sucrose-induced leaf growth stimulation independently of GPT2. May participate to the stimulation of hypocotyl elongation under long-day (LD) conditions. Forms a nuclear complex with CLF and EZA1/SWN to target common glucose-responsive genes and regulate glucose signaling. Is required for CLF- and EZA1/SWN-mediated histone H3 trimethylation on 'Lys-27' (H3K27me3) and glucose-mediated gene repression. The polypeptide is Hexokinase-1 (Arabidopsis thaliana (Mouse-ear cress)).